A 262-amino-acid chain; its full sequence is Phenylalanine-4-hydroxylase (262 aa).

Fe cation is bound by residues histidine 121, histidine 126, and glutamate 166.

It belongs to the biopterin-dependent aromatic amino acid hydroxylase family. In terms of assembly, monomer. It depends on Fe(2+) as a cofactor.

The enzyme catalyses (6R)-L-erythro-5,6,7,8-tetrahydrobiopterin + L-phenylalanine + O2 = (4aS,6R)-4a-hydroxy-L-erythro-5,6,7,8-tetrahydrobiopterin + L-tyrosine. It participates in amino-acid degradation; L-phenylalanine degradation; acetoacetate and fumarate from L-phenylalanine: step 1/6. The chain is Phenylalanine-4-hydroxylase (phhA) from Pseudomonas aeruginosa (strain ATCC 15692 / DSM 22644 / CIP 104116 / JCM 14847 / LMG 12228 / 1C / PRS 101 / PAO1).